The chain runs to 449 residues: Probable glycine dehydrogenase (decarboxylating) subunit 1 (449 aa).

Belongs to the GcvP family. N-terminal subunit subfamily. As to quaternary structure, the glycine cleavage system is composed of four proteins: P, T, L and H. In this organism, the P 'protein' is a heterodimer of two subunits.

It catalyses the reaction N(6)-[(R)-lipoyl]-L-lysyl-[glycine-cleavage complex H protein] + glycine + H(+) = N(6)-[(R)-S(8)-aminomethyldihydrolipoyl]-L-lysyl-[glycine-cleavage complex H protein] + CO2. In terms of biological role, the glycine cleavage system catalyzes the degradation of glycine. The P protein binds the alpha-amino group of glycine through its pyridoxal phosphate cofactor; CO(2) is released and the remaining methylamine moiety is then transferred to the lipoamide cofactor of the H protein. This is Probable glycine dehydrogenase (decarboxylating) subunit 1 from Oceanobacillus iheyensis (strain DSM 14371 / CIP 107618 / JCM 11309 / KCTC 3954 / HTE831).